Here is a 173-residue protein sequence, read N- to C-terminus: Photosystem I assembly protein Ycf3 (173 aa).

3 TPR repeats span residues Ala-35 to Pro-68, Gly-72 to Gln-105, and Gly-120 to Gly-153.

This sequence belongs to the Ycf3 family.

It is found in the cellular thylakoid membrane. In terms of biological role, essential for the assembly of the photosystem I (PSI) complex. May act as a chaperone-like factor to guide the assembly of the PSI subunits. This Synechococcus sp. (strain CC9902) protein is Photosystem I assembly protein Ycf3.